Here is a 345-residue protein sequence, read N- to C-terminus: MKKGCKYGTHRVIEPAGVLPQPAKKISNDMEIFSNEILIDVIALNIDSASFTQIEEEAGHDVEKVKAKIKEIVAERGKMQNPVTGSGGMLIGTVEKIGDDLVGKTDLKVGDKIATLVSLSLTPLRIDEIINIKPEIDRVEIKGKAILFESGIYAVLPKDMPENLALAALDVAGAPAQVAKLVKPCQSVAILGSAGKSGMLCAYEAVKRVGPTGKVIGVVRNDKEKALLQRVSDKVKIVIADATKPMDVLHAVLEANDAKEVDVAINCVNVPNTEMSTILPVKEFGIAYFFSMATGFSKAALGAEGVGKDITMIVGNGYTVDHAAITLEELRESAVLREIFNEIYL.

This sequence belongs to the KDD family. Homodimer.

The enzyme catalyses (3S,5S)-3,5-diaminohexanoate + NAD(+) + H2O = (5S)-5-amino-3-oxohexanoate + NH4(+) + NADH + H(+). The protein operates within amino-acid degradation; L-lysine degradation via acetate pathway. Functionally, involved in the anaerobic fermentation of lysine. Catalyzes the oxidative deamination of L-erythro-3,5-diaminohexanoate (3,5-DAH) to 3-keto-5-aminohexanoate (KAH). It can use NAD or NADP. The polypeptide is L-erythro-3,5-diaminohexanoate dehydrogenase (Fusobacterium nucleatum subsp. nucleatum (strain ATCC 25586 / DSM 15643 / BCRC 10681 / CIP 101130 / JCM 8532 / KCTC 2640 / LMG 13131 / VPI 4355)).